The primary structure comprises 347 residues: Ribosomal RNA small subunit methyltransferase C (347 aa).

This sequence belongs to the methyltransferase superfamily. RsmC family. As to quaternary structure, monomer.

It localises to the cytoplasm. The catalysed reaction is guanosine(1207) in 16S rRNA + S-adenosyl-L-methionine = N(2)-methylguanosine(1207) in 16S rRNA + S-adenosyl-L-homocysteine + H(+). Functionally, specifically methylates the guanine in position 1207 of 16S rRNA in the 30S particle. This Yersinia pseudotuberculosis serotype IB (strain PB1/+) protein is Ribosomal RNA small subunit methyltransferase C.